Reading from the N-terminus, the 188-residue chain is Protein GrpE (188 aa).

The disordered stretch occupies residues Met1–Glu24.

The protein belongs to the GrpE family. Homodimer.

The protein resides in the cytoplasm. Participates actively in the response to hyperosmotic and heat shock by preventing the aggregation of stress-denatured proteins, in association with DnaK and GrpE. It is the nucleotide exchange factor for DnaK and may function as a thermosensor. Unfolded proteins bind initially to DnaJ; upon interaction with the DnaJ-bound protein, DnaK hydrolyzes its bound ATP, resulting in the formation of a stable complex. GrpE releases ADP from DnaK; ATP binding to DnaK triggers the release of the substrate protein, thus completing the reaction cycle. Several rounds of ATP-dependent interactions between DnaJ, DnaK and GrpE are required for fully efficient folding. The protein is Protein GrpE of Hyphomonas neptunium (strain ATCC 15444).